A 151-amino-acid polypeptide reads, in one-letter code: D-aminoacyl-tRNA deacylase (151 aa).

The short motif at 136–137 is the Gly-cisPro motif, important for rejection of L-amino acids element; it reads GP.

The protein belongs to the DTD family. Homodimer.

Its subcellular location is the cytoplasm. The catalysed reaction is glycyl-tRNA(Ala) + H2O = tRNA(Ala) + glycine + H(+). It catalyses the reaction a D-aminoacyl-tRNA + H2O = a tRNA + a D-alpha-amino acid + H(+). Its function is as follows. An aminoacyl-tRNA editing enzyme that deacylates mischarged D-aminoacyl-tRNAs. Also deacylates mischarged glycyl-tRNA(Ala), protecting cells against glycine mischarging by AlaRS. Acts via tRNA-based rather than protein-based catalysis; rejects L-amino acids rather than detecting D-amino acids in the active site. By recycling D-aminoacyl-tRNA to D-amino acids and free tRNA molecules, this enzyme counteracts the toxicity associated with the formation of D-aminoacyl-tRNA entities in vivo and helps enforce protein L-homochirality. This is D-aminoacyl-tRNA deacylase from Lactococcus lactis subsp. lactis (strain IL1403) (Streptococcus lactis).